We begin with the raw amino-acid sequence, 121 residues long: Large ribosomal subunit protein bL31 (121 aa).

A large ribosomal subunit protein bL31 region spans residues 1-97; the sequence is MKEGIHPDYK…AKENRAAKRA (97 aa). Cys-16, Cys-18, Cys-36, and Cys-39 together coordinate Zn(2+). Residues 65-80 show a composition bias toward low complexity; that stretch reads ATPAKAEPAKKAPAAE. A disordered region spans residues 65 to 121; it reads ATPAKAEPAKKAPAAEPAKKVEAAKENRAAKRAKAGKSKKSEAAPAAEAPAADAKPE. The segment at 74–121 is unknown; that stretch reads KKAPAAEPAKKVEAAKENRAAKRAKAGKSKKSEAAPAAEAPAADAKPE. The segment covering 81-93 has biased composition (basic and acidic residues); the sequence is PAKKVEAAKENRA. Residues 107 to 121 show a composition bias toward low complexity; the sequence is AAPAAEAPAADAKPE.

This sequence belongs to the bacterial ribosomal protein bL31 family. Type A subfamily. Part of the 50S ribosomal subunit. Zn(2+) is required as a cofactor.

In terms of biological role, binds the 23S rRNA. The protein is Large ribosomal subunit protein bL31 of Anaeromyxobacter dehalogenans (strain 2CP-C).